Reading from the N-terminus, the 215-residue chain is MAPRPRFDRRAPVRELPNINDRINYPKLRVVDADGTQLGVISRDEALDVARERELDLVLVSEKADPPVCRIMDYGKFKFEQEKKAKEAKKKSHQTEVKEVKMRYKIDAHDYQVRIGQAVRFLKAGDKVKCTVIFRGREIQHTALAEKLLMRMAKDLEESAEVQQPPKREGRNMIMFLGPRKTPLQKDKPEQATKAERTLPIAKPPGKTAAPAAAN.

Residues 159–215 (SAEVQQPPKREGRNMIMFLGPRKTPLQKDKPEQATKAERTLPIAKPPGKTAAPAAAN) are disordered. A compositionally biased stretch (basic and acidic residues) spans 184 to 197 (LQKDKPEQATKAER). The segment covering 200–215 (PIAKPPGKTAAPAAAN) has biased composition (low complexity).

Belongs to the IF-3 family. In terms of assembly, monomer.

It localises to the cytoplasm. IF-3 binds to the 30S ribosomal subunit and shifts the equilibrium between 70S ribosomes and their 50S and 30S subunits in favor of the free subunits, thus enhancing the availability of 30S subunits on which protein synthesis initiation begins. This chain is Translation initiation factor IF-3, found in Synechococcus sp. (strain RCC307).